The following is a 297-amino-acid chain: uncharacterized protein (297 aa).

Glu-46 is an active-site residue.

Belongs to the PhzF family. In terms of assembly, homodimer and homotetramer.

This is an uncharacterized protein from Escherichia coli (strain K12).